A 268-amino-acid polypeptide reads, in one-letter code: Tryptophan synthase alpha chain (268 aa).

Catalysis depends on proton acceptor residues E49 and D60.

Belongs to the TrpA family. Tetramer of two alpha and two beta chains.

It catalyses the reaction (1S,2R)-1-C-(indol-3-yl)glycerol 3-phosphate + L-serine = D-glyceraldehyde 3-phosphate + L-tryptophan + H2O. It functions in the pathway amino-acid biosynthesis; L-tryptophan biosynthesis; L-tryptophan from chorismate: step 5/5. The alpha subunit is responsible for the aldol cleavage of indoleglycerol phosphate to indole and glyceraldehyde 3-phosphate. The chain is Tryptophan synthase alpha chain from Pseudomonas aeruginosa (strain ATCC 15692 / DSM 22644 / CIP 104116 / JCM 14847 / LMG 12228 / 1C / PRS 101 / PAO1).